The chain runs to 93 residues: Large ribosomal subunit protein eL42 (93 aa).

Residues Cys11, Cys14, Cys71, and Cys74 each contribute to the Zn(2+) site. The segment at 11–74 adopts a C4-type zinc-finger fold; it reads CRYCGKHTLH…VNIRFRCTEC (64 aa).

It belongs to the eukaryotic ribosomal protein eL42 family. Part of the 50S ribosomal subunit. Zn(2+) is required as a cofactor.

Functionally, binds to the 23S rRNA. The chain is Large ribosomal subunit protein eL42 from Archaeoglobus fulgidus (strain ATCC 49558 / DSM 4304 / JCM 9628 / NBRC 100126 / VC-16).